We begin with the raw amino-acid sequence, 328 residues long: Nuclear transcription factor Y subunit A-8 (328 aa).

The interval 54 to 86 (KNISFQDQDSSSTLSSAQSSNDVTSSGDDNPSR) is disordered. The span at 57 to 75 (SFQDQDSSSTLSSAQSSND) shows a compositional bias: low complexity. Polar residues predominate over residues 76-86 (VTSSGDDNPSR). A Subunit association domain (SAD) motif is present at residues 175-198 (FVNAKQFHAIMRRRQQRAKLEAQN). A DNA-binding region (NFYA/HAP2-type) is located at residues 205-230 (KPYLHESRHVHALKRPRGSGGRFLNT).

This sequence belongs to the NFYA/HAP2 subunit family. As to quaternary structure, heterotrimeric transcription factor composed of three components, NF-YA, NF-YB and NF-YC. NF-YB and NF-YC must interact and dimerize for NF-YA association and DNA binding. As to expression, expressed in the whole plant, except roots.

The protein resides in the nucleus. In terms of biological role, stimulates the transcription of various genes by recognizing and binding to a CCAAT motif in promoters. In Arabidopsis thaliana (Mouse-ear cress), this protein is Nuclear transcription factor Y subunit A-8 (NFYA8).